The chain runs to 421 residues: CaM kinase-like vesicle-associated protein (421 aa).

The 261-residue stretch at 24–284 (YDLGQVVKSE…AQEAIAHEWI (261 aa)) folds into the Protein kinase domain. The segment at 326 to 421 (ASEQGDTGAS…PQMLPQRKGY (96 aa)) is disordered. Low complexity-rich tracts occupy residues 330–340 (GDTGASGLAAG) and 390–406 (QQQA…QQAR).

This sequence belongs to the protein kinase superfamily. CAMK Ser/Thr protein kinase family. In terms of assembly, interacts with calmodulin, in the presence of calcium. Ca(2+) is required as a cofactor. Ubiquitously expressed.

The protein localises to the cytoplasmic vesicle membrane. Its function is as follows. Does not appear to have detectable kinase activity. The sequence is that of CaM kinase-like vesicle-associated protein (camkv) from Takifugu rubripes (Japanese pufferfish).